Consider the following 337-residue polypeptide: DNA-directed RNA polymerase subunit alpha (337 aa).

Residues 1–233 (MIQKNWQELI…DQLSIFVNFE (233 aa)) form an alpha N-terminal domain (alpha-NTD) region. The alpha C-terminal domain (alpha-CTD) stretch occupies residues 249-337 (FNPALLKKVD…DLAKRYEDQY (89 aa)).

Belongs to the RNA polymerase alpha chain family. As to quaternary structure, homodimer. The RNAP catalytic core consists of 2 alpha, 1 beta, 1 beta' and 1 omega subunit. When a sigma factor is associated with the core the holoenzyme is formed, which can initiate transcription.

The enzyme catalyses RNA(n) + a ribonucleoside 5'-triphosphate = RNA(n+1) + diphosphate. Functionally, DNA-dependent RNA polymerase catalyzes the transcription of DNA into RNA using the four ribonucleoside triphosphates as substrates. The chain is DNA-directed RNA polymerase subunit alpha from Brucella suis (strain ATCC 23445 / NCTC 10510).